The sequence spans 315 residues: Transaldolase (315 aa).

The active-site Schiff-base intermediate with substrate is the lysine 125.

The protein belongs to the transaldolase family. Type 1 subfamily. In terms of assembly, homodimer.

The protein localises to the cytoplasm. The catalysed reaction is D-sedoheptulose 7-phosphate + D-glyceraldehyde 3-phosphate = D-erythrose 4-phosphate + beta-D-fructose 6-phosphate. It functions in the pathway carbohydrate degradation; pentose phosphate pathway; D-glyceraldehyde 3-phosphate and beta-D-fructose 6-phosphate from D-ribose 5-phosphate and D-xylulose 5-phosphate (non-oxidative stage): step 2/3. Functionally, transaldolase is important for the balance of metabolites in the pentose-phosphate pathway. This chain is Transaldolase, found in Polaromonas naphthalenivorans (strain CJ2).